Consider the following 570-residue polypeptide: Urease subunit alpha (570 aa).

The Urease domain maps to glycine 131–phenylalanine 570. 3 residues coordinate Ni(2+): histidine 136, histidine 138, and lysine 219. Lysine 219 carries the post-translational modification N6-carboxylysine. Histidine 221 serves as a coordination point for substrate. Ni(2+) contacts are provided by histidine 248 and histidine 274. The Proton donor role is filled by histidine 322. Position 362 (aspartate 362) interacts with Ni(2+).

Belongs to the metallo-dependent hydrolases superfamily. Urease alpha subunit family. As to quaternary structure, heterotrimer of UreA (gamma), UreB (beta) and UreC (alpha) subunits. Three heterotrimers associate to form the active enzyme. Requires Ni cation as cofactor. In terms of processing, carboxylation allows a single lysine to coordinate two nickel ions.

Its subcellular location is the cytoplasm. The catalysed reaction is urea + 2 H2O + H(+) = hydrogencarbonate + 2 NH4(+). The protein operates within nitrogen metabolism; urea degradation; CO(2) and NH(3) from urea (urease route): step 1/1. The polypeptide is Urease subunit alpha (Rhizobium leguminosarum bv. trifolii (strain WSM2304)).